A 109-amino-acid polypeptide reads, in one-letter code: Sperm-specific class P protein 9/11 (109 aa).

One can recognise an MSP domain in the interval 2-109; the sequence is SLTADPPACT…TVTIPMSATA (108 aa).

As to expression, expressed at higher level in testis.

This is Sperm-specific class P protein 9/11 (ssp-9) from Caenorhabditis elegans.